Reading from the N-terminus, the 157-residue chain is 2-C-methyl-D-erythritol 2,4-cyclodiphosphate synthase (157 aa).

D8 and H10 together coordinate a divalent metal cation. 4-CDP-2-C-methyl-D-erythritol 2-phosphate is bound by residues 8-10 (DVH) and 34-35 (HS). Residue H42 participates in a divalent metal cation binding. Residues 56–58 (DIG), 61–65 (FPDSD), 132–135 (TTTE), F139, and R142 each bind 4-CDP-2-C-methyl-D-erythritol 2-phosphate.

The protein belongs to the IspF family. Homotrimer. Requires a divalent metal cation as cofactor.

The catalysed reaction is 4-CDP-2-C-methyl-D-erythritol 2-phosphate = 2-C-methyl-D-erythritol 2,4-cyclic diphosphate + CMP. It participates in isoprenoid biosynthesis; isopentenyl diphosphate biosynthesis via DXP pathway; isopentenyl diphosphate from 1-deoxy-D-xylulose 5-phosphate: step 4/6. Its function is as follows. Involved in the biosynthesis of isopentenyl diphosphate (IPP) and dimethylallyl diphosphate (DMAPP), two major building blocks of isoprenoid compounds. Catalyzes the conversion of 4-diphosphocytidyl-2-C-methyl-D-erythritol 2-phosphate (CDP-ME2P) to 2-C-methyl-D-erythritol 2,4-cyclodiphosphate (ME-CPP) with a corresponding release of cytidine 5-monophosphate (CMP). This chain is 2-C-methyl-D-erythritol 2,4-cyclodiphosphate synthase, found in Syntrophomonas wolfei subsp. wolfei (strain DSM 2245B / Goettingen).